We begin with the raw amino-acid sequence, 178 residues long: Large ribosomal subunit protein uL6 (178 aa).

It belongs to the universal ribosomal protein uL6 family. As to quaternary structure, part of the 50S ribosomal subunit.

Functionally, this protein binds to the 23S rRNA, and is important in its secondary structure. It is located near the subunit interface in the base of the L7/L12 stalk, and near the tRNA binding site of the peptidyltransferase center. This chain is Large ribosomal subunit protein uL6, found in Kocuria rhizophila (strain ATCC 9341 / DSM 348 / NBRC 103217 / DC2201).